Here is a 98-residue protein sequence, read N- to C-terminus: Cystatin-B (98 aa).

Met-1 carries the N-acetylmethionine modification. Positions Gln-46–Gly-50 match the Secondary area of contact motif.

Belongs to the cystatin family. As to quaternary structure, able to form dimers stabilized by noncovalent forces.

It is found in the cytoplasm. This is an intracellular thiol proteinase inhibitor. The protein is Cystatin-B (CSTB) of Ovis aries (Sheep).